We begin with the raw amino-acid sequence, 228 residues long: Ribose-5-phosphate isomerase A (228 aa).

Substrate contacts are provided by residues 32–35, 85–88, and 98–101; these read TGST, DGAD, and KGGG. Glutamate 107 functions as the Proton acceptor in the catalytic mechanism. Lysine 125 is a binding site for substrate.

It belongs to the ribose 5-phosphate isomerase family. In terms of assembly, homodimer.

The catalysed reaction is aldehydo-D-ribose 5-phosphate = D-ribulose 5-phosphate. The protein operates within carbohydrate degradation; pentose phosphate pathway; D-ribose 5-phosphate from D-ribulose 5-phosphate (non-oxidative stage): step 1/1. Its function is as follows. Catalyzes the reversible conversion of ribose-5-phosphate to ribulose 5-phosphate. This Ralstonia nicotianae (strain ATCC BAA-1114 / GMI1000) (Ralstonia solanacearum) protein is Ribose-5-phosphate isomerase A.